The following is a 177-amino-acid chain: Large ribosomal subunit protein uL6 (177 aa).

The protein belongs to the universal ribosomal protein uL6 family. In terms of assembly, part of the 50S ribosomal subunit.

This protein binds to the 23S rRNA, and is important in its secondary structure. It is located near the subunit interface in the base of the L7/L12 stalk, and near the tRNA binding site of the peptidyltransferase center. This is Large ribosomal subunit protein uL6 from Sinorhizobium medicae (strain WSM419) (Ensifer medicae).